The sequence spans 1339 residues: Transcription factor tau subunit sfc3 (1339 aa).

The segment at 470-515 (MESNAEVSPDGMTLLPRKRGRPRKSANISVTSSPIRPSKNENNLPS) is disordered. The a.T hook DNA-binding region spans 485 to 497 (PRKRGRPRKSANI). The segment covering 495 to 514 (ANISVTSSPIRPSKNENNLP) has biased composition (polar residues). A phosphoserine mark is found at S595 and S596. A disordered region spans residues 791–826 (RRKSMPAEIKRHKESSETKPVDKEEVKKNEKEKDDP). Basic and acidic residues predominate over residues 798–826 (EIKRHKESSETKPVDKEEVKKNEKEKDDP).

Component of the TFIIIC complex including sfc1, sfc3, sfc4, sfc6 and sfc7. The subunits are organized in two globular domains, tauA and tauB, connected by a proteolysis-sensitive and flexible linker. Interacts with sfc1, sfc4 and sfc6.

The protein resides in the nucleus envelope. In terms of biological role, TFIIIC mediates tRNA and 5S RNA gene activation by binding to intragenic promoter elements. Upstream of the transcription start site, TFIIIC assembles the initiation complex TFIIIB-TFIIIC-tDNA, which is sufficient for RNA polymerase III recruitment and function. Part of the tauB domain of TFIIIC that binds boxB DNA promoter sites of tRNA and similar genes. Cooperates with sfc6 in DNA binding. Localizes to chromatin insulator sequence without recruiting RNA polymerase III and plays a role in nuclear organization. The protein is Transcription factor tau subunit sfc3 of Schizosaccharomyces pombe (strain 972 / ATCC 24843) (Fission yeast).